The following is a 264-amino-acid chain: uncharacterized protein (264 aa).

Disordered regions lie at residues 1–52 and 123–207; these read MPRS…AVPG and GGRW…PWTR. Over residues 29 to 40 the composition is skewed to low complexity; sequence AAHPTTSPTAAS. The segment covering 144–154 has biased composition (polar residues); the sequence is HFQSSGAQQES. Positions 188 to 197 are enriched in basic residues; sequence ARKSACKCPR.

This is an uncharacterized protein from Homo sapiens (Human).